Consider the following 123-residue polypeptide: ATP synthase epsilon chain (123 aa).

It belongs to the ATPase epsilon chain family. As to quaternary structure, F-type ATPases have 2 components, CF(1) - the catalytic core - and CF(0) - the membrane proton channel. CF(1) has five subunits: alpha(3), beta(3), gamma(1), delta(1), epsilon(1). CF(0) has three main subunits: a, b and c.

It localises to the cell inner membrane. Its function is as follows. Produces ATP from ADP in the presence of a proton gradient across the membrane. In Helicobacter pylori (strain Shi470), this protein is ATP synthase epsilon chain.